Consider the following 357-residue polypeptide: Cyclin-dependent kinase-like 1 (357 aa).

The 284-residue stretch at 4–287 (YEKIGKIGEG…CEQLLHHPYF (284 aa)) folds into the Protein kinase domain. ATP is bound by residues 10–18 (IGEGSYGVV) and Lys-33. The [NKR]KIAxRE motif lies at 45 to 51 (KKIALRE). Residue Asp-126 is the Proton acceptor of the active site.

The protein belongs to the protein kinase superfamily. CMGC Ser/Thr protein kinase family. CDC2/CDKX subfamily. As to expression, highly expressed in kidney, and to a lower extent in ovary.

The protein resides in the cytoplasm. The protein localises to the nucleus. The enzyme catalyses L-seryl-[protein] + ATP = O-phospho-L-seryl-[protein] + ADP + H(+). The catalysed reaction is L-threonyl-[protein] + ATP = O-phospho-L-threonyl-[protein] + ADP + H(+). In Homo sapiens (Human), this protein is Cyclin-dependent kinase-like 1.